Consider the following 155-residue polypeptide: uncharacterized protein (155 aa).

The interval 56–79 (GEKRPTHRRPYRRTKPYPKRPSML) is disordered. Positions 60–73 (PTHRRPYRRTKPYP) are enriched in basic residues.

This is an uncharacterized protein from Sinorhizobium fredii (strain NBRC 101917 / NGR234).